A 601-amino-acid polypeptide reads, in one-letter code: NAD-dependent malic enzyme 59 kDa isoform, mitochondrial (601 aa).

The N-terminal 18 residues, 1 to 18 (MWRVARSAASTFRRTRRL), are a transit peptide targeting the mitochondrion. Tyr129 (proton donor) is an active-site residue. NAD(+) is bound at residue Arg182. The Proton acceptor role is filled by Lys200. Glu271, Asp272, and Asp295 together coordinate a divalent metal cation. Asp295 and Asn444 together coordinate NAD(+).

It belongs to the malic enzymes family. Heterodimer of two related subunits. The cofactor is Mg(2+). Mn(2+) serves as cofactor.

Its subcellular location is the mitochondrion matrix. It catalyses the reaction (S)-malate + NAD(+) = pyruvate + CO2 + NADH. The polypeptide is NAD-dependent malic enzyme 59 kDa isoform, mitochondrial (Solanum tuberosum (Potato)).